An 852-amino-acid chain; its full sequence is Disks large homolog 2 (852 aa).

Residues cysteine 5 and cysteine 7 are each lipidated (S-palmitoyl cysteine). Serine 28 carries the post-translational modification Phosphoserine. Tyrosine 58 bears the Phosphotyrosine mark. Serine 65 is subject to Phosphoserine. PDZ domains lie at 98 to 185 (EITL…RRRR) and 193 to 280 (EIKL…GKPT). Residues serine 307, serine 328, serine 360, serine 365, serine 406, and serine 414 each carry the phosphoserine modification. In terms of domain architecture, PDZ 3 spans 421–502 (KVVLHKGSTG…TVTIIAQYQP (82 aa)). Tyrosine 505 is subject to Phosphotyrosine. Serine 528, serine 530, and serine 553 each carry phosphoserine. The SH3 domain maps to 536–606 (KRSLYVRAMF…PSKRRVERKE (71 aa)). One can recognise a Guanylate kinase-like domain in the interval 662–837 (TRPVIILGPM…IYNQCKLVIE (176 aa)). Tyrosine 732 and tyrosine 737 each carry phosphotyrosine.

Interacts with NOS1/nNOS through second PDZ domain. Interacts with KCNJ2/Kir2.1 (via C-terminus) through one of its PDZ domains. Interacts with KCNJ4. Interacts with FRMPD4 (via C-terminus). Interacts through its PDZ domains with NETO1. Interacts with LRFN1, LRFN2 and LRFN4. Interacts with FASLG. Interacts with KCNJ4. Interacts with ADAM22. Interacts with DGKI (via PDZ-binding motif). Post-translationally, palmitoylation of isoform 1 and isoform 2 is not required for targeting to postsynaptic density. As to expression, brain. Highest levels of isoform 1 in cortex, olfactory bulb, thalamus, hypothalamus, striatum and hippocampus. Highest level of isoform 2 in olfactory bulb. Reduced levels in cortex and hippocampus. Highest level of isoform 4 in spinal cord. Low levels of isoform 4, isoform 6, and isoform 7 in superior cervical ganglion.

Its subcellular location is the cell membrane. The protein localises to the postsynaptic density. The protein resides in the synapse. It localises to the membrane. It is found in the cell projection. Its subcellular location is the axon. The protein localises to the perikaryon. Functionally, required for perception of chronic pain through NMDA receptor signaling. Regulates surface expression of NMDA receptors in dorsal horn neurons of the spinal cord. Interacts with the cytoplasmic tail of NMDA receptor subunits as well as inward rectifying potassium channels. Involved in regulation of synaptic stability at cholinergic synapses. Part of the postsynaptic protein scaffold of excitatory synapses. The sequence is that of Disks large homolog 2 (Dlg2) from Mus musculus (Mouse).